The following is a 593-amino-acid chain: SPI-1 type 3 secretion system translocon protein SctE (593 aa).

2 coiled-coil regions span residues aspartate 151 to alanine 208 and glutamate 287 to methionine 314. 2 helical membrane-spanning segments follow: residues valine 330–valine 350 and isoleucine 409–valine 429.

The protein belongs to the SctE/SipB/YopB family. The core secretion machinery of the T3SS is composed of approximately 20 different proteins, including cytoplasmic components, a base, an export apparatus and a needle. This subunit is involved in the formation of a pore, called the translocon, in host membrane.

It is found in the secreted. The protein localises to the host membrane. In terms of biological role, component of the type III secretion system 1 (SPI-1 T3SS), also called injectisome, which is used to inject bacterial effector proteins into eukaryotic host cells. SipB/SctE1 and SipC/SctB are inserted into the host membrane where they form a pore and allow the translocation of effector proteins into the cytosol of target cells. The sequence is that of SPI-1 type 3 secretion system translocon protein SctE from Salmonella dublin.